The sequence spans 119 residues: Small ribosomal subunit protein bS6 (119 aa).

The interval Val-96–Ala-119 is disordered.

The protein belongs to the bacterial ribosomal protein bS6 family.

In terms of biological role, binds together with bS18 to 16S ribosomal RNA. The protein is Small ribosomal subunit protein bS6 of Alkalilimnicola ehrlichii (strain ATCC BAA-1101 / DSM 17681 / MLHE-1).